Reading from the N-terminus, the 344-residue chain is GDSL esterase/lipase At1g73610 (344 aa).

An N-terminal signal peptide occupies residues 1–24 (MNCLMFFKMLLAFSFISLFYVGNA). N-linked (GlcNAc...) asparagine glycosylation is present at N30. S42 serves as the catalytic Nucleophile. Active-site residues include D319 and H322.

This sequence belongs to the 'GDSL' lipolytic enzyme family.

It is found in the secreted. In Arabidopsis thaliana (Mouse-ear cress), this protein is GDSL esterase/lipase At1g73610.